The sequence spans 235 residues: Serine protease SplA (235 aa).

Residues 1–35 (MNKNVMIKGLTALTILTSLGFAENISDQPHSIAKA) form the signal peptide. Catalysis depends on charge relay system residues histidine 74, aspartate 113, and serine 189.

Belongs to the peptidase S1B family.

It is found in the secreted. This Staphylococcus aureus protein is Serine protease SplA (splA).